A 226-amino-acid polypeptide reads, in one-letter code: Transcriptional regulatory protein DpiA (226 aa).

Residues 6–122 (TLLIVEDETP…RLGQTLTRFR (117 aa)) enclose the Response regulatory domain. Aspartate 57 carries the 4-aspartylphosphate modification. Positions 180 to 199 (AETVAQALTISRTTARRYLE) form a DNA-binding region, H-T-H motif.

In terms of processing, phosphorylated and activated by DpiB.

Its subcellular location is the cytoplasm. Functionally, member of the two-component regulatory system DpiA/DpiB, which is essential for expression of citrate-specific fermentation genes and genes involved in plasmid inheritance. Could be involved in response to both the presence of citrate and external redox conditions. This chain is Transcriptional regulatory protein DpiA (dpiA), found in Escherichia coli O157:H7.